A 115-amino-acid chain; its full sequence is MRPLAALSQGIGLLMRGLIWLYRLFLSPLLGQNCRFDPSCSRYALEAITRHGPFWGLWLAVRRISRCHPWGGMGYDPVPDDPRPGRCGCKDAGPAVSAGSTEGNPGRRTDGTDPD.

The disordered stretch occupies residues 81-115 (DPRPGRCGCKDAGPAVSAGSTEGNPGRRTDGTDPD). The span at 105-115 (PGRRTDGTDPD) shows a compositional bias: basic and acidic residues.

It belongs to the UPF0161 family.

The protein resides in the cell inner membrane. In terms of biological role, could be involved in insertion of integral membrane proteins into the membrane. The chain is Putative membrane protein insertion efficiency factor from Rhodospirillum rubrum (strain ATCC 11170 / ATH 1.1.1 / DSM 467 / LMG 4362 / NCIMB 8255 / S1).